The sequence spans 257 residues: Diphthine synthase (257 aa).

S-adenosyl-L-methionine contacts are provided by residues Leu-9, Asp-86, Val-89, 114–115 (SI), Leu-166, Ala-207, and His-232.

The protein belongs to the diphthine synthase family. As to quaternary structure, homodimer.

It catalyses the reaction 2-[(3S)-amino-3-carboxypropyl]-L-histidyl-[translation elongation factor 2] + 3 S-adenosyl-L-methionine = diphthine-[translation elongation factor 2] + 3 S-adenosyl-L-homocysteine + 3 H(+). Its pathway is protein modification; peptidyl-diphthamide biosynthesis. S-adenosyl-L-methionine-dependent methyltransferase that catalyzes the trimethylation of the amino group of the modified target histidine residue in translation elongation factor 2 (EF-2), to form an intermediate called diphthine. The three successive methylation reactions represent the second step of diphthamide biosynthesis. This Methanocella arvoryzae (strain DSM 22066 / NBRC 105507 / MRE50) protein is Diphthine synthase.